Here is a 399-residue protein sequence, read N- to C-terminus: Digeranylgeranylglycerophospholipid reductase (399 aa).

Gly15, Glu34, Cys45, Ala46, Gly48, Arg99, Ala123, Asp280, Gly292, and Ile293 together coordinate FAD.

The protein belongs to the geranylgeranyl reductase family. DGGGPL reductase subfamily. It depends on FAD as a cofactor.

It catalyses the reaction a 2,3-bis-O-phytanyl-sn-glycerol 1-phospholipid + 8 oxidized 2[4Fe-4S]-[ferredoxin] = a 2,3-bis-O-(geranylgeranyl)-sn-glycerol 1-phospholipid + 8 reduced 2[4Fe-4S]-[ferredoxin] + 16 H(+). It carries out the reaction 2,3-bis-O-(phytanyl)-sn-glycerol 1-phosphate + 8 oxidized 2[4Fe-4S]-[ferredoxin] = 2,3-bis-O-(geranylgeranyl)-sn-glycerol 1-phosphate + 8 reduced 2[4Fe-4S]-[ferredoxin] + 16 H(+). The catalysed reaction is a 2,3-bis-O-phytanyl-sn-glycerol 1-phospholipid + 8 A = a 2,3-bis-O-(geranylgeranyl)-sn-glycerol 1-phospholipid + 8 AH2. The enzyme catalyses CDP-2,3-bis-O-(geranylgeranyl)-sn-glycerol + 8 AH2 = CDP-2,3-bis-O-(phytanyl)-sn-glycerol + 8 A. It catalyses the reaction archaetidylserine + 8 AH2 = 2,3-bis-O-phytanyl-sn-glycero-3-phospho-L-serine + 8 A. Its pathway is membrane lipid metabolism; glycerophospholipid metabolism. Is involved in the reduction of 2,3-digeranylgeranylglycerophospholipids (unsaturated archaeols) into 2,3-diphytanylglycerophospholipids (saturated archaeols) in the biosynthesis of archaeal membrane lipids. Catalyzes the formation of archaetidic acid (2,3-di-O-phytanyl-sn-glyceryl phosphate) from 2,3-di-O-geranylgeranylglyceryl phosphate (DGGGP) via the hydrogenation of each double bond of the isoprenoid chains. Is also probably able to reduce double bonds of geranyl groups in CDP-2,3-bis-O-(geranylgeranyl)-sn-glycerol and archaetidylserine, thus acting at various stages in the biosynthesis of archaeal membrane lipids. The sequence is that of Digeranylgeranylglycerophospholipid reductase from Methanosphaerula palustris (strain ATCC BAA-1556 / DSM 19958 / E1-9c).